The primary structure comprises 873 residues: Serine/threonine-protein phosphatase 4 regulatory subunit 4 (873 aa).

3 HEAT repeats span residues 213-251 (ILPL…TKSV), 252-290 (VLPE…RSQT), and 392-427 (NFHM…SKLL). A coiled-coil region spans residues 686–720 (QKKFYEKDLLDQEKEREELLLLEMEQLEKEKQQND). Residues 713–737 (EKEKQQNDGRPMSDKMFEKKRRDTK) show a composition bias toward basic and acidic residues. The interval 713–766 (EKEKQQNDGRPMSDKMFEKKRRDTKTPTQSLPKNIPISVPGPSSVTPSTSKEIK) is disordered. Residues 747 to 762 (IPISVPGPSSVTPSTS) are compositionally biased toward low complexity. Ser-775 is subject to Phosphoserine. Thr-797 is modified (phosphothreonine). The segment covering 822-858 (TRNASSVPSSFSPNTPLPSTSRGTGNSVDPKSSGSKD) has biased composition (polar residues). Residues 822-873 (TRNASSVPSSFSPNTPLPSTSRGTGNSVDPKSSGSKDTQPRKATLKSRKSNP) are disordered. Residues 864 to 873 (ATLKSRKSNP) show a composition bias toward basic residues.

Serine/threonine-protein phosphatase 4 (PP4) occurs in different assemblies of the catalytic and one or more regulatory subunits. Component of the PP4 complex PPP4C-PPP4R4.

The protein localises to the cytoplasm. Functionally, putative regulatory subunit of serine/threonine-protein phosphatase 4. The sequence is that of Serine/threonine-protein phosphatase 4 regulatory subunit 4 (PPP4R4) from Homo sapiens (Human).